Reading from the N-terminus, the 151-residue chain is Ribonuclease P protein component (151 aa).

The segment at 1–62 (MDEKDLATQP…LKGDSAFRRL (62 aa)) is disordered. Positions 28–48 (GAQGAEAQAAEGPLAAHAQGA) are enriched in low complexity.

Belongs to the RnpA family. In terms of assembly, consists of a catalytic RNA component (M1 or rnpB) and a protein subunit.

The enzyme catalyses Endonucleolytic cleavage of RNA, removing 5'-extranucleotides from tRNA precursor.. Its function is as follows. RNaseP catalyzes the removal of the 5'-leader sequence from pre-tRNA to produce the mature 5'-terminus. It can also cleave other RNA substrates such as 4.5S RNA. The protein component plays an auxiliary but essential role in vivo by binding to the 5'-leader sequence and broadening the substrate specificity of the ribozyme. This is Ribonuclease P protein component from Thermus oshimai.